The primary structure comprises 2009 residues: Sodium channel protein type 1 subunit alpha (2009 aa).

Residues 1–128 (MEQTVLVPPG…KIAIKILVHS (128 aa)) lie on the Cytoplasmic side of the membrane. The span at 28–48 (RIAEEKAKNPKPDKKDDDENG) shows a compositional bias: basic and acidic residues. The interval 28 to 60 (RIAEEKAKNPKPDKKDDDENGPKPNSDLEAGKN) is disordered. Residues 110 to 454 (ILTPFNPLRK…QQMLEQLKKQ (345 aa)) form an I repeat. The helical transmembrane segment at 129 to 146 (LFSMLIMCTILTNCVFMT) threads the bilayer. The Extracellular segment spans residues 147 to 152 (MSNPPD). Residues 153 to 177 (WTKNVEYTFTGIYTFESLIKIIARG) form a helical membrane-spanning segment. Residues 178-188 (FCLEDFTFLRD) are Cytoplasmic-facing. A helical transmembrane segment spans residues 189–205 (PWNWLDFTVITFAYVTE). Residues 206 to 213 (FVDLGNVS) lie on the Extracellular side of the membrane. N-linked (GlcNAc...) asparagine glycosylation is present at asparagine 211. A helical transmembrane segment spans residues 214–235 (ALRTFRVLRALKTISVIPGLKT). Topologically, residues 236–245 (IVGALIQSVK) are cytoplasmic. Residues 246–269 (KLSDVMILTVFCLSVFALIGLQLF) traverse the membrane as a helical segment. At 270–369 (MGNLRNKCVQ…YGYTSFDTFS (100 aa)) the chain is on the extracellular side. Intrachain disulfides connect cysteine 277-cysteine 345 and cysteine 336-cysteine 351. 5 N-linked (GlcNAc...) asparagine glycosylation sites follow: asparagine 284, asparagine 295, asparagine 301, asparagine 306, and asparagine 338. Residues 370–384 (WAFLSLFRLMTQDFW) constitute an intramembrane region (pore-forming). Residues 385 to 397 (ENLYQLTLRAAGK) are Extracellular-facing. Residues 398 to 423 (TYMIFFVLVIFLGSFYLINLILAVVA) form a helical membrane-spanning segment. The Cytoplasmic segment spans residues 424 to 768 (MAYEEQNQAT…HIVNLVVMDP (345 aa)). A disordered region spans residues 458–528 (AQQAAAATAS…EFHKSESEDS (71 aa)). Serine 470 is subject to Phosphoserine. Positions 479-492 (LSDSSSEASKLSSK) are enriched in low complexity. Residues 495–506 (KERRNRRKKRKQ) show a composition bias toward basic residues. Basic and acidic residues predominate over residues 507–528 (KEQSGGEEKDDDEFHKSESEDS). Phosphoserine occurs at positions 523, 525, 550, 551, 607, and 730. The disordered stretch occupies residues 584–628 (VGSENDFADDEHSTFEDNESRRDSLFVPRRHGERRNSNLSQTSRS). The segment covering 593–607 (DEHSTFEDNESRRDS) has biased composition (basic and acidic residues). Residues 750 to 1022 (CSPYWLKVKH…QIAVDRMHKG (273 aa)) form an II repeat. A helical transmembrane segment spans residues 769–787 (FVDLAITICIVLNTLFMAM). Residues 788-797 (EHYPMTEHFN) are Extracellular-facing. A helical membrane pass occupies residues 798–820 (HVLTVGNLVFTGIFTAEMFLKII). Topologically, residues 821–830 (AMDPYYYFQE) are cytoplasmic. A helical transmembrane segment spans residues 831–849 (GWNIFDGFIVTLSLVELGL). Residues 850 to 854 (ANVEG) are Extracellular-facing. A helical membrane pass occupies residues 855-874 (LSVLRSFRLLRVFKLAKSWP). The Cytoplasmic portion of the chain corresponds to 875 to 891 (TLNMLIKIIGNSVGALG). The helical transmembrane segment at 892-912 (NLTLVLAIIVFIFAVVGMQLF) threads the bilayer. Residues 913-938 (GKSYKDCVCKIATDCKLPRWHMNDFF) are Extracellular-facing. Cysteine 921 and cysteine 927 are disulfide-bonded. Positions 939-952 (HSFLIVFRVLCGEW) form an intramembrane region, pore-forming. Residues 953 to 965 (IETMWDCMEVAGQ) are Extracellular-facing. Residues cysteine 959 and cysteine 968 are joined by a disulfide bond. A helical membrane pass occupies residues 966–992 (AMCLTVFMMVMVIRNLVVLNLFLALLL). Topologically, residues 993–1218 (SSFSADNLAA…RTCFRIVEHN (226 aa)) are cytoplasmic. Residues 1129-1163 (TEDFSSESDLEESKEKLNESSSSSEGSTVDIGAPA) are disordered. One copy of the III repeat lies at 1200-1514 (RGKQWWNLRR…KKYYNAMKKL (315 aa)). A helical membrane pass occupies residues 1219-1237 (WFETFIVFMILLSSGALAF). At 1238–1250 (EDIYIDQRKTIKT) the chain is on the extracellular side. The chain crosses the membrane as a helical span at residues 1251–1276 (MLEYADKVFTYIFILEMLLKWVAYGY). Residues 1277–1278 (QT) lie on the Cytoplasmic side of the membrane. The helical transmembrane segment at 1279-1304 (YFTNAWCWLDFLIVDVSLVSLTANAL) threads the bilayer. Topologically, residues 1305–1313 (GYSELGAIK) are extracellular. Residues 1314–1332 (SLRTLRALRPLRALSRFEG) traverse the membrane as a helical segment. The Cytoplasmic segment spans residues 1333 to 1345 (MRVVVNALLGAIP). Residues 1346–1369 (SIMNVLLVCLIFWLIFSIMGVNLF) traverse the membrane as a helical segment. The Extracellular portion of the chain corresponds to 1370–1415 (AGKFYHCVNTTTGDTFEITEVNNHSDCLKLIERNETARWKNVKVNF). A disulfide bond links cysteine 1376 and cysteine 1396. Residues asparagine 1378, asparagine 1392, and asparagine 1403 are each glycosylated (N-linked (GlcNAc...) asparagine). Residues 1416-1433 (DNVGFGYLSLLQVATFKG) constitute an intramembrane region (pore-forming). Residues 1434–1457 (WMDIMYAAVDSRNVELQPKYEESL) lie on the Extracellular side of the membrane. The helical transmembrane segment at 1458–1483 (YMYLYFVIFIIFGSFFTLNLFIGVII) threads the bilayer. The Cytoplasmic segment spans residues 1484–1541 (DNFNQQKKKFGGQDIFMTEEQKKYYNAMKKLGSKKPQKPIPRPGNKFQGMVFDFVTRQ). Position 1516 is a phosphoserine; by PKC (serine 1516). One copy of the IV repeat lies at 1523–1821 (IPRPGNKFQG…WEKFDPDATQ (299 aa)). The helical transmembrane segment at 1542 to 1560 (VFDISIMILICLNMVTMMV) threads the bilayer. Over 1561–1571 (ETDDQSDYVTS) the chain is Extracellular. An S1-S2 loop of repeat IV region spans residues 1561 to 1571 (ETDDQSDYVTS). Residues 1572–1593 (ILSRINLVFIVLFTGECVLKLI) traverse the membrane as a helical segment. Topologically, residues 1594-1601 (SLRHYYFT) are cytoplasmic. Residues 1602–1623 (IGWNIFDFVVVILSIVGMFLAE) form a helical membrane-spanning segment. Positions 1619–1636 (MFLAELIEKYFVSPTLFR) are S3b-S4 loop of repeat IV. Over 1624-1636 (LIEKYFVSPTLFR) the chain is Extracellular. Residues 1637–1655 (VIRLARIGRILRLIKGAKG) traverse the membrane as a helical segment. The Cytoplasmic portion of the chain corresponds to 1656-1665 (IRTLLFALMM). The chain crosses the membrane as a helical span at residues 1666-1688 (SLPALFNIGLLLFLVMFIYAIFG). Topologically, residues 1689 to 1711 (MSNFAYVKREVGIDDMFNFETFG) are extracellular. The pore-forming intramembrane region spans 1712–1726 (NSMICLFQITTSAGW). Residues 1727–1759 (DGLLAPILNSKPPDCDPNKVNPGSSVKGDCGNP) are Extracellular-facing. Cysteine 1741 and cysteine 1756 are oxidised to a cystine. A helical membrane pass occupies residues 1760 to 1788 (SVGIFFFVSYIIISFLVVVNMYIAVILEN). Over 1789-2009 (FSVATEESAE…EGKDEKAKGK (221 aa)) the chain is Cytoplasmic. Positions 1915–1944 (EEVSAVIIQRAYRRHLLKRTVKQASFTYNK) constitute an IQ domain. Residues 1986–2009 (YDRVTKPIVEKHEQEGKDEKAKGK) form a disordered region. The segment covering 1988–2009 (RVTKPIVEKHEQEGKDEKAKGK) has biased composition (basic and acidic residues).

Belongs to the sodium channel (TC 1.A.1.10) family. Nav1.1/SCN1A subfamily. As to quaternary structure, the Nav1.1 voltage-gated sodium channel consists of an ion-conducting alpha subunit SCN1A which is functional on its own regulated by one or more beta-1 (SCN1B), beta-2 (SCN2B), beta-3 (SCN3B) and beta-4 (SCN4B) subunits. SCN1B and SCN3B are non-covalently associated with SCN1A. SCN2B and SCN4B are disulfide-linked to SCN1A. SCN1B regulates both the expression at the plasma membrane and the voltage dependence of Nav1.1 inactivation. SCN3B and SCN4B reduce Nav1.1 conductance. Probably interacts with TMEM233; modulates the gating properties of NaV1.1. Interacts with FGF13; regulates the steady-state inactivation of Nav.1.1. Post-translationally, phosphorylation at Ser-1516 by PKC in a highly conserved cytoplasmic loop slows inactivation of the sodium channel and reduces peak sodium currents.

Its subcellular location is the cell membrane. The enzyme catalyses Na(+)(in) = Na(+)(out). Activated by the spider toxins Hm1a and Hm1b (H.maculata, AC P60992 and AC P0DOC5) eliciting acute pain and mechanical allodynia. Inhibited by the conotoxin GVIIJ. In terms of biological role, pore-forming subunit of Nav1.1, a voltage-gated sodium (Nav) channel that directly mediates the depolarizing phase of action potentials in excitable membranes. Navs, also called VGSCs (voltage-gated sodium channels) or VDSCs (voltage-dependent sodium channels), operate by switching between closed and open conformations depending on the voltage difference across the membrane. In the open conformation they allow Na(+) ions to selectively pass through the pore, along their electrochemical gradient. The influx of Na(+) ions provokes membrane depolarization, initiating the propagation of electrical signals throughout cells and tissues. By regulating the excitability of neurons, ensures that they respond appropriately to synaptic inputs, maintaining the balance between excitation and inhibition in brain neural circuits. Nav1.1 plays a role in controlling the excitability and action potential propagation from somatosensory neurons, thereby contributing to the sensory perception of mechanically-induced pain. This is Sodium channel protein type 1 subunit alpha from Rattus norvegicus (Rat).